Consider the following 508-residue polypeptide: ADP-ribosylarginine hydrolase CG3568 (508 aa).

Residues Arg-209, Gly-349, Gly-351, Gly-353, Val-354, Trp-355, Trp-390, Asp-441, Asn-448, Glu-449, Gly-459, and Asp-460 each coordinate ADP-D-ribose.

It catalyses the reaction N(omega)-(ADP-D-ribosyl)-L-arginyl-[protein] + H2O = ADP-D-ribose + L-arginyl-[protein]. It carries out the reaction N(omega)-(ADP-D-ribosyl)-L-arginine + H2O = ADP-D-ribose + L-arginine. In terms of biological role, protein ADP-ribosyl hydrolase that specifically removes mono-ADP-ribosyl modifications from protein arginine residues. The protein is ADP-ribosylarginine hydrolase CG3568 of Drosophila melanogaster (Fruit fly).